The primary structure comprises 208 residues: Holliday junction branch migration complex subunit RuvA (208 aa).

The segment at 1–67 is domain I; sequence MIGWLHGTIG…EDGQQLYGFE (67 aa). The tract at residues 68–146 is domain II; sequence TKADRNLFRL…ERWQQQGGST (79 aa). A flexible linker region spans residues 147–157; that stretch reads PLRLVEPVAES. The tract at residues 157–208 is domain III; that stretch reads SRELRATLEALGYGPEEVSAAVAQAGSQGLDPEQPMEEWLRHCLAWLSRQAG.

It belongs to the RuvA family. Homotetramer. Forms an RuvA(8)-RuvB(12)-Holliday junction (HJ) complex. HJ DNA is sandwiched between 2 RuvA tetramers; dsDNA enters through RuvA and exits via RuvB. An RuvB hexamer assembles on each DNA strand where it exits the tetramer. Each RuvB hexamer is contacted by two RuvA subunits (via domain III) on 2 adjacent RuvB subunits; this complex drives branch migration. In the full resolvosome a probable DNA-RuvA(4)-RuvB(12)-RuvC(2) complex forms which resolves the HJ.

The protein localises to the cytoplasm. The RuvA-RuvB-RuvC complex processes Holliday junction (HJ) DNA during genetic recombination and DNA repair, while the RuvA-RuvB complex plays an important role in the rescue of blocked DNA replication forks via replication fork reversal (RFR). RuvA specifically binds to HJ cruciform DNA, conferring on it an open structure. The RuvB hexamer acts as an ATP-dependent pump, pulling dsDNA into and through the RuvAB complex. HJ branch migration allows RuvC to scan DNA until it finds its consensus sequence, where it cleaves and resolves the cruciform DNA. This Synechococcus sp. (strain RCC307) protein is Holliday junction branch migration complex subunit RuvA.